Here is an 801-residue protein sequence, read N- to C-terminus: Squamosa promoter-binding-like protein 7 (801 aa).

Disordered stretches follow at residues 1–23 (MSSL…LVND) and 59–91 (SPPL…DRVR). The segment at 135 to 212 (VARCQVPDCE…ERHNNRRKRK (78 aa)) adopts an SBP-type; atypical zinc-finger fold. The Zn(2+) site is built by Cys138, Cys143, Cys160, Cys163, Cys179, Cys182, His186, and Cys198. Residues 195–211 (KRSCRRKLERHNNRRKR) carry the Bipartite nuclear localization signal motif. A compositionally biased stretch (basic residues) spans 203–213 (ERHNNRRKRKP). 2 disordered regions span residues 203–258 (ERHN…PSLI) and 286–313 (GSGE…NKSA). Positions 222–233 (EQQQVLSQNDNS) are enriched in polar residues. Positions 249–258 (QRAEEEPSLI) are enriched in basic and acidic residues. Residues 304–313 (SPSNGDNKSA) show a composition bias toward polar residues.

As to quaternary structure, homodimer. Interacts with KIN17. Interacts with HY5. Zn(2+) serves as cofactor. In terms of tissue distribution, expressed in roots rosette leaves, cauline leaves, stems, flowers and siliques.

It localises to the nucleus speckle. Its function is as follows. Transcription factor that participates in reprogramming global gene expression during copper deficiency in order to improve the metal uptake and prioritize its distribution to copper proteins of major importance. Binds directly to 5'-GTAC-3' motifs in the microRNA (miRNA) promoter of the stress-responsive miRNAs miR398b and miR398c to activate their transcription. During copper deficiency, activates the copper transporters COPT1 and COPT2, and the copper chaperone CCH, directly or indirectly via miRNAs. Required for the expression of the miRNAs miR397, miR408 and miR857. Acts coordinately with HY5 to regulate miR408 and its target genes in response to changes in light and copper conditions. Activates miR857 and its target genes in response to low copper conditions. Involved in cadmium stress response by regulating miR397a, miR398b, miR398c and miR857. Required for iron homeostasis during copper deficiency. This is Squamosa promoter-binding-like protein 7 (SPL7) from Arabidopsis thaliana (Mouse-ear cress).